Consider the following 92-residue polypeptide: Phospholemman (92 aa).

Positions 1-20 (MAPLHHILVLCVGFLTTATA) are cleaved as a signal peptide. The Extracellular segment spans residues 21–35 (EAPQEHDPFTYDYQS). Residues 36-56 (LRIGGLIIAGILFILGILIVL) traverse the membrane as a helical segment. Over 57–92 (SRRCRCKFNQQQRTGEPDEEEGTFRSSIRRLSTRRR) the chain is Cytoplasmic. The S-palmitoyl cysteine moiety is linked to residue C60. An S-glutathionyl cysteine; alternate modification is found at C62. C62 carries S-palmitoyl cysteine; alternate lipidation. A disordered region spans residues 65–92 (NQQQRTGEPDEEEGTFRSSIRRLSTRRR). Residue T79 is modified to Phosphothreonine. A Phosphoserine modification is found at S82. S83 and S88 each carry phosphoserine; by PKA and PKC. The segment covering 83-92 (SIRRLSTRRR) has biased composition (basic residues). T89 bears the Phosphothreonine; by PKC mark.

The protein belongs to the FXYD family. In terms of assembly, homotetramer. Monomer. Regulatory subunit of the sodium/potassium-transporting ATPase (NKA) which is composed of a catalytic alpha subunit, a non-catalytic beta subunit and an additional regulatory subunit. The monomeric form associates with NKA while the oligomeric form does not. Interacts with the catalytic alpha-1 subunit ATP1A1. Also interacts with the catalytic alpha-2 and alpha-3 subunits ATP1A2 and ATP1A3. Very little interaction with the alpha subunits ATP1A1, ATP1A2 or ATP1A3 when phosphorylated at Ser-83. Interacts with non-catalytic beta-1 subunit ATP1B1. Oxidative stress decreases interaction with ATP1A1 but increases interaction with ATP1B1. In terms of processing, major plasma membrane substrate for cAMP-dependent protein kinase (PKA) and protein kinase C (PKC) in several different tissues. Phosphorylated in response to insulin and adrenergic stimulation. Phosphorylation at Ser-88 stimulates sodium/potassium-transporting ATPase activity while the unphosphorylated form inhibits sodium/potassium-transporting ATPase activity. Phosphorylation increases tetramerization, decreases binding to ATP1A1 and reduces inhibition of ATP1A1 activity. Phosphorylation at Ser-83 leads to greatly reduced interaction with ATP1A1, ATP1A2 and ATP1A3. May be phosphorylated by DMPK. Post-translationally, palmitoylation increases half-life and stability and is enhanced upon phosphorylation at Ser-88 by PKA. In terms of tissue distribution, present in heart, esophagus, stomach, aorta, skeletal muscle, smooth muscle, and liver but absent from brain and kidney.

Its subcellular location is the cell membrane. The protein localises to the sarcolemma. The protein resides in the apical cell membrane. It is found in the membrane. It localises to the caveola. Its subcellular location is the T-tubule. In terms of biological role, associates with and regulates the activity of the sodium/potassium-transporting ATPase (NKA) which transports Na(+) out of the cell and K(+) into the cell. Inhibits NKA activity in its unphosphorylated state and stimulates activity when phosphorylated. Reduces glutathionylation of the NKA beta-1 subunit ATP1B1, thus reversing glutathionylation-mediated inhibition of ATP1B1. Contributes to female sexual development by maintaining the excitability of neurons which secrete gonadotropin-releasing hormone. In Canis lupus familiaris (Dog), this protein is Phospholemman.